The chain runs to 116 residues: Proline-rich protein 9 (116 aa).

The protein is Proline-rich protein 9 (PRR9) of Bos taurus (Bovine).